Consider the following 548-residue polypeptide: mRNA cleavage and polyadenylation factor CLP1 (548 aa).

Residues Glu19, Lys60, and 123-128 contribute to the ATP site; that span reads SSGKTT. Positions 437–481 are enriched in basic and acidic residues; that stretch reads ESEVKEEVKEEKNEKDGEIKQDGEGEKKGEGKGEGEGEGEGKYGE. The interval 437–500 is disordered; it reads ESEVKEEVKE…DEEEVPFREE (64 aa). A compositionally biased stretch (acidic residues) spans 482–494; the sequence is EEGEAEGEDDEEE.

It belongs to the Clp1 family. Clp1 subfamily. As to quaternary structure, component of a pre-mRNA cleavage factor complex. Interacts directly with PCF11.

It is found in the nucleus. Functionally, required for endonucleolytic cleavage during polyadenylation-dependent pre-mRNA 3'-end formation. The sequence is that of mRNA cleavage and polyadenylation factor CLP1 from Cryptococcus neoformans var. neoformans serotype D (strain B-3501A) (Filobasidiella neoformans).